Here is a 173-residue protein sequence, read N- to C-terminus: Urease accessory protein UreE (173 aa).

The disordered stretch occupies residues 136–173; that stretch reads PEGGAYAGSGQDHHDHSHGEHTQGEHTHDEAAEPHHHG. Residues 146–173 show a composition bias toward basic and acidic residues; it reads QDHHDHSHGEHTQGEHTHDEAAEPHHHG.

It belongs to the UreE family.

The protein localises to the cytoplasm. Functionally, involved in urease metallocenter assembly. Binds nickel. Probably functions as a nickel donor during metallocenter assembly. The sequence is that of Urease accessory protein UreE from Beijerinckia indica subsp. indica (strain ATCC 9039 / DSM 1715 / NCIMB 8712).